The primary structure comprises 319 residues: Formimidoylglutamase (319 aa).

The Mn(2+) site is built by asparagine 127, aspartate 150, histidine 152, aspartate 154, aspartate 242, and aspartate 244.

This sequence belongs to the arginase family. Mn(2+) serves as cofactor.

The catalysed reaction is N-formimidoyl-L-glutamate + H2O = formamide + L-glutamate. Its pathway is amino-acid degradation; L-histidine degradation into L-glutamate; L-glutamate from N-formimidoyl-L-glutamate (hydrolase route): step 1/1. Functionally, catalyzes the conversion of N-formimidoyl-L-glutamate to L-glutamate and formamide. This is Formimidoylglutamase from Bacillus subtilis (strain 168).